Reading from the N-terminus, the 177-residue chain is Large ribosomal subunit protein uL6 (177 aa).

The protein belongs to the universal ribosomal protein uL6 family. As to quaternary structure, part of the 50S ribosomal subunit.

Functionally, this protein binds to the 23S rRNA, and is important in its secondary structure. It is located near the subunit interface in the base of the L7/L12 stalk, and near the tRNA binding site of the peptidyltransferase center. The protein is Large ribosomal subunit protein uL6 of Rhizobium meliloti (strain 1021) (Ensifer meliloti).